A 96-amino-acid chain; its full sequence is Probable Fe(2+)-trafficking protein (96 aa).

The segment at 21-40 is disordered; sequence LPKMPHPPFPNKKGQELQET.

This sequence belongs to the Fe(2+)-trafficking protein family.

Functionally, could be a mediator in iron transactions between iron acquisition and iron-requiring processes, such as synthesis and/or repair of Fe-S clusters in biosynthetic enzymes. This is Probable Fe(2+)-trafficking protein from Psychrobacter arcticus (strain DSM 17307 / VKM B-2377 / 273-4).